The chain runs to 244 residues: MAKRRGLALDGVLLLDKPVGLSSNHALQRAKRTVDAAKAGHTGTLDPFATGLLVCCMGRATKISGRMLEADKTYQAMLQFGEETDSGDLTGHIVARAPDGFAGVEEAALRDVLSRFVGTIEQIPPMYSALKRDGKPLYEYARAGIELDRPPRQVTIRHIELLSFSGMQAQIDVACSKGTYIRTLAQDIGRALGCHAHLAALRRTHVGPFSLDRAVTLEALQAMPDAKQALLAMNELPAGLLPAT.

The active-site Nucleophile is aspartate 46.

This sequence belongs to the pseudouridine synthase TruB family. Type 1 subfamily.

It catalyses the reaction uridine(55) in tRNA = pseudouridine(55) in tRNA. In terms of biological role, responsible for synthesis of pseudouridine from uracil-55 in the psi GC loop of transfer RNAs. This chain is tRNA pseudouridine synthase B, found in Bordetella parapertussis (strain 12822 / ATCC BAA-587 / NCTC 13253).